We begin with the raw amino-acid sequence, 195 residues long: Dynactin subunit 6 (195 aa).

This sequence belongs to the dynactin subunits 5/6 family. Dynactin subunit 6 subfamily. Member of the pointed-end complex of the dynactin shoulder complex which contains dctn4, dctn5 and dctn6 subunits and Actr10. Within the complex dctn6 forms a heterodimer with dctn5. Interacts with plk1.

The protein resides in the cytoplasm. Its subcellular location is the cytoskeleton. The protein localises to the chromosome. It is found in the centromere. It localises to the kinetochore. In terms of biological role, part of the dynactin complex that activates the molecular motor dynein for ultra-processive transport along microtubules. The sequence is that of Dynactin subunit 6 (dctn6) from Danio rerio (Zebrafish).